Consider the following 477-residue polypeptide: Glycogen synthase (477 aa).

ADP-alpha-D-glucose is bound at residue Lys-15.

The protein belongs to the glycosyltransferase 1 family. Bacterial/plant glycogen synthase subfamily.

The enzyme catalyses [(1-&gt;4)-alpha-D-glucosyl](n) + ADP-alpha-D-glucose = [(1-&gt;4)-alpha-D-glucosyl](n+1) + ADP + H(+). The protein operates within glycan biosynthesis; glycogen biosynthesis. In terms of biological role, synthesizes alpha-1,4-glucan chains using ADP-glucose. This chain is Glycogen synthase, found in Shigella dysenteriae serotype 1 (strain Sd197).